The sequence spans 243 residues: DNA repair protein RecO (243 aa).

It belongs to the RecO family.

Its function is as follows. Involved in DNA repair and RecF pathway recombination. The chain is DNA repair protein RecO from Thermobifida fusca (strain YX).